We begin with the raw amino-acid sequence, 181 residues long: Large ribosomal subunit protein uL5 (181 aa).

The protein belongs to the universal ribosomal protein uL5 family. Part of the 50S ribosomal subunit; part of the 5S rRNA/L5/L18/L25 subcomplex. Contacts the 5S rRNA and the P site tRNA. Forms a bridge to the 30S subunit in the 70S ribosome.

In terms of biological role, this is one of the proteins that bind and probably mediate the attachment of the 5S RNA into the large ribosomal subunit, where it forms part of the central protuberance. In the 70S ribosome it contacts protein S13 of the 30S subunit (bridge B1b), connecting the 2 subunits; this bridge is implicated in subunit movement. Contacts the P site tRNA; the 5S rRNA and some of its associated proteins might help stabilize positioning of ribosome-bound tRNAs. The polypeptide is Large ribosomal subunit protein uL5 (Mycoplasmopsis pulmonis (strain UAB CTIP) (Mycoplasma pulmonis)).